Reading from the N-terminus, the 336-residue chain is Protein-glutamate methylesterase/protein-glutamine glutaminase 3 (336 aa).

The region spanning 2 to 119 is the Response regulatory domain; sequence KIAIVNDMPM…PNPKEAAAPL (118 aa). 4-aspartylphosphate is present on Asp-53. The 190-residue stretch at 147–336 folds into the CheB-type methylesterase domain; sequence PARRDRLVAI…APRLVEVFTQ (190 aa). Residues Ser-159, His-186, and Asp-279 contribute to the active site.

This sequence belongs to the CheB family. In terms of processing, phosphorylated by CheA. Phosphorylation of the N-terminal regulatory domain activates the methylesterase activity.

The protein localises to the cytoplasm. The catalysed reaction is [protein]-L-glutamate 5-O-methyl ester + H2O = L-glutamyl-[protein] + methanol + H(+). The enzyme catalyses L-glutaminyl-[protein] + H2O = L-glutamyl-[protein] + NH4(+). In terms of biological role, involved in chemotaxis. Part of a chemotaxis signal transduction system that modulates chemotaxis in response to various stimuli. Catalyzes the demethylation of specific methylglutamate residues introduced into the chemoreceptors (methyl-accepting chemotaxis proteins or MCP) by CheR. Also mediates the irreversible deamidation of specific glutamine residues to glutamic acid. In Pseudomonas savastanoi pv. phaseolicola (strain 1448A / Race 6) (Pseudomonas syringae pv. phaseolicola (strain 1448A / Race 6)), this protein is Protein-glutamate methylesterase/protein-glutamine glutaminase 3.